Consider the following 252-residue polypeptide: MAVPKKSTKERLESLLDDLEVLSREVIETLALSRSQKLSQPGEENQILELLIQKDGEFQELMKVAFSQGKTHQEMQVLEKEVEKRDSDIQQLQKQLKEAEHILATAVYQAKEKLKSIDKARKGVISSEELIKYAHRISASNAVCAPLTWVPGDPRRPYPTDLEMRSGLLGQMSNLPTNGVNGHLPGDALAAGRLPDVLAPQYPWQSSDMSMNMLPPNHSNEFLMESLGPNKENEEDVEVMSTDSSSSSSDSD.

Coiled-coil stretches lie at residues 5–31 (KKST…ETLA) and 70–112 (KTHQ…QAKE). A disordered region spans residues 213-252 (MLPPNHSNEFLMESLGPNKENEEDVEVMSTDSSSSSSDSD). Over residues 241-252 (STDSSSSSSDSD) the composition is skewed to low complexity.

Belongs to the Mediator complex subunit 4 family. In terms of assembly, component of the Mediator complex.

The protein resides in the nucleus. Functionally, component of the Mediator complex, a coactivator involved in the regulated transcription of nearly all RNA polymerase II-dependent genes. Mediator functions as a bridge to convey information from gene-specific regulatory proteins to the basal RNA polymerase II transcription machinery. Mediator is recruited to promoters by direct interactions with regulatory proteins and serves as a scaffold for the assembly of a functional preinitiation complex with RNA polymerase II and the general transcription factors. The chain is Mediator of RNA polymerase II transcription subunit 4 (med4) from Xenopus laevis (African clawed frog).